A 100-amino-acid polypeptide reads, in one-letter code: Protamine-2 (100 aa).

Residues 1 to 45 (MVRYHVRSPSERPHREYRQLVNGQEQGRHGQEEQGMSAEGVEGYG) form a disordered region. 3 positions are modified to phosphoserine: serine 8, serine 10, and serine 37. Basic and acidic residues predominate over residues 8–18 (SPSERPHREYR).

Belongs to the protamine P2 family. Interacts with TDRP. Post-translationally, proteolytic processing into mature chains is required for histone eviction during spermatogenesis. Transition proteins (TNP1 and TNP2) are required for processing. Testis.

The protein resides in the nucleus. It localises to the chromosome. Its function is as follows. Protamines substitute for histones in the chromatin of sperm during the haploid phase of spermatogenesis. They compact sperm DNA into a highly condensed, stable and inactive complex. The protein is Protamine-2 (PRM2) of Alouatta seniculus (Red howler monkey).